A 150-amino-acid polypeptide reads, in one-letter code: Large ribosomal subunit protein uL15 (150 aa).

Over residues 1–13 (MADNDAIKVHDLR) the composition is skewed to basic and acidic residues. The disordered stretch occupies residues 1-44 (MADNDAIKVHDLRPAPGAKTAKTRVGRGEASKGKTAGRGTKGTK).

Belongs to the universal ribosomal protein uL15 family. As to quaternary structure, part of the 50S ribosomal subunit.

Binds to the 23S rRNA. The chain is Large ribosomal subunit protein uL15 from Micrococcus luteus (strain ATCC 4698 / DSM 20030 / JCM 1464 / CCM 169 / CCUG 5858 / IAM 1056 / NBRC 3333 / NCIMB 9278 / NCTC 2665 / VKM Ac-2230) (Micrococcus lysodeikticus).